The primary structure comprises 190 residues: Threonylcarbamoyl-AMP synthase (190 aa).

Positions 10–190 (PQDKESVYRH…DWHSRQVIRA (181 aa)) constitute a YrdC-like domain.

This sequence belongs to the SUA5 family. TsaC subfamily.

The protein resides in the cytoplasm. It catalyses the reaction L-threonine + hydrogencarbonate + ATP = L-threonylcarbamoyladenylate + diphosphate + H2O. Its function is as follows. Required for the formation of a threonylcarbamoyl group on adenosine at position 37 (t(6)A37) in tRNAs that read codons beginning with adenine. Catalyzes the conversion of L-threonine, HCO(3)(-)/CO(2) and ATP to give threonylcarbamoyl-AMP (TC-AMP) as the acyladenylate intermediate, with the release of diphosphate. In Dichelobacter nodosus (strain VCS1703A), this protein is Threonylcarbamoyl-AMP synthase.